A 623-amino-acid chain; its full sequence is Chaperone protein HtpG (623 aa).

The tract at residues 1–336 (MVSKQQTMGF…ASDLPLNISR (336 aa)) is a; substrate-binding. The segment at 337 to 550 (EILQDNKQVE…EQDMGLEMQR (214 aa)) is b. The tract at residues 551 to 623 (ILQAAGQQVP…NRVNRLLVSS (73 aa)) is c.

Belongs to the heat shock protein 90 family. Homodimer.

The protein resides in the cytoplasm. In terms of biological role, molecular chaperone. Has ATPase activity. The sequence is that of Chaperone protein HtpG from Legionella pneumophila (strain Paris).